Reading from the N-terminus, the 299-residue chain is Coenzyme PQQ synthesis protein B (299 aa).

It belongs to the PqqB family.

It participates in cofactor biosynthesis; pyrroloquinoline quinone biosynthesis. In terms of biological role, may be involved in the transport of PQQ or its precursor to the periplasm. This chain is Coenzyme PQQ synthesis protein B, found in Methylobacterium nodulans (strain LMG 21967 / CNCM I-2342 / ORS 2060).